We begin with the raw amino-acid sequence, 150 residues long: Large ribosomal subunit protein bL9 (150 aa).

It belongs to the bacterial ribosomal protein bL9 family.

Functionally, binds to the 23S rRNA. This chain is Large ribosomal subunit protein bL9, found in Methylibium petroleiphilum (strain ATCC BAA-1232 / LMG 22953 / PM1).